We begin with the raw amino-acid sequence, 379 residues long: Chaperone protein DnaJ (379 aa).

Positions Asp-5–Gly-69 constitute a J domain. The CR-type zinc-finger motif lies at Gly-136–Thr-218. Zn(2+) is bound by residues Cys-149, Cys-152, Cys-166, Cys-169, Cys-192, Cys-195, Cys-206, and Cys-209. CXXCXGXG motif repeat units follow at residues Cys-149–Gly-156, Cys-166–Gly-173, Cys-192–Gly-199, and Cys-206–Gly-213.

This sequence belongs to the DnaJ family. As to quaternary structure, homodimer. Zn(2+) serves as cofactor.

It is found in the cytoplasm. Participates actively in the response to hyperosmotic and heat shock by preventing the aggregation of stress-denatured proteins and by disaggregating proteins, also in an autonomous, DnaK-independent fashion. Unfolded proteins bind initially to DnaJ; upon interaction with the DnaJ-bound protein, DnaK hydrolyzes its bound ATP, resulting in the formation of a stable complex. GrpE releases ADP from DnaK; ATP binding to DnaK triggers the release of the substrate protein, thus completing the reaction cycle. Several rounds of ATP-dependent interactions between DnaJ, DnaK and GrpE are required for fully efficient folding. Also involved, together with DnaK and GrpE, in the DNA replication of plasmids through activation of initiation proteins. The polypeptide is Chaperone protein DnaJ (Staphylococcus aureus (strain USA300 / TCH1516)).